Consider the following 301-residue polypeptide: Homoserine O-acetyltransferase (301 aa).

Cys142 (acyl-thioester intermediate) is an active-site residue. Substrate contacts are provided by Lys163 and Ser192. His235 functions as the Proton acceptor in the catalytic mechanism. Residue Glu237 is part of the active site. Arg249 provides a ligand contact to substrate.

This sequence belongs to the MetA family.

Its subcellular location is the cytoplasm. It catalyses the reaction L-homoserine + acetyl-CoA = O-acetyl-L-homoserine + CoA. It functions in the pathway amino-acid biosynthesis; L-methionine biosynthesis via de novo pathway; O-acetyl-L-homoserine from L-homoserine: step 1/1. In terms of biological role, transfers an acetyl group from acetyl-CoA to L-homoserine, forming acetyl-L-homoserine. The sequence is that of Homoserine O-acetyltransferase from Bacillus cereus (strain 03BB102).